The primary structure comprises 314 residues: Small ribosomal subunit biogenesis GTPase RsgA (314 aa).

The tract at residues 1–21 (MKRAPTKQPAKPAARGGERAQ) is disordered. One can recognise a CP-type G domain in the interval 85–246 (SDQFKSKLFA…LIDSPGFQEF (162 aa)). GTP-binding positions include 134-137 (NKID) and 188-196 (GQSGMGKST). Residues C270, C275, H277, and C283 each contribute to the Zn(2+) site.

Belongs to the TRAFAC class YlqF/YawG GTPase family. RsgA subfamily. Monomer. Associates with 30S ribosomal subunit, binds 16S rRNA. It depends on Zn(2+) as a cofactor.

The protein localises to the cytoplasm. Its function is as follows. One of several proteins that assist in the late maturation steps of the functional core of the 30S ribosomal subunit. Helps release RbfA from mature subunits. May play a role in the assembly of ribosomal proteins into the subunit. Circularly permuted GTPase that catalyzes slow GTP hydrolysis, GTPase activity is stimulated by the 30S ribosomal subunit. The sequence is that of Small ribosomal subunit biogenesis GTPase RsgA from Burkholderia pseudomallei (strain 1106a).